Here is a 220-residue protein sequence, read N- to C-terminus: Deoxyribose-phosphate aldolase (220 aa).

D89 acts as the Proton donor/acceptor in catalysis. Catalysis depends on K151, which acts as the Schiff-base intermediate with acetaldehyde. The active-site Proton donor/acceptor is K180.

It belongs to the DeoC/FbaB aldolase family. DeoC type 1 subfamily.

It localises to the cytoplasm. It carries out the reaction 2-deoxy-D-ribose 5-phosphate = D-glyceraldehyde 3-phosphate + acetaldehyde. The protein operates within carbohydrate degradation; 2-deoxy-D-ribose 1-phosphate degradation; D-glyceraldehyde 3-phosphate and acetaldehyde from 2-deoxy-alpha-D-ribose 1-phosphate: step 2/2. Its function is as follows. Catalyzes a reversible aldol reaction between acetaldehyde and D-glyceraldehyde 3-phosphate to generate 2-deoxy-D-ribose 5-phosphate. This chain is Deoxyribose-phosphate aldolase, found in Bdellovibrio bacteriovorus (strain ATCC 15356 / DSM 50701 / NCIMB 9529 / HD100).